The primary structure comprises 111 residues: Small ubiquitin-related modifier 3 (111 aa).

The Ubiquitin-like domain maps to 16-93; that stretch reads AHVILKVKSQ…IDACRAMSGG (78 aa). Residue glycine 93 forms a Glycyl lysine isopeptide (Gly-Lys) (interchain with K-? in acceptor proteins) linkage.

The protein belongs to the ubiquitin family. SUMO subfamily. Interacts with SAE2, SCE1, SIZ1 and MMS21. Covalently attached to a number of proteins. Interacts with NPR1; this interaction promotes NPR1 phosphorylation and triggers its sumoylation and subsequent degradation.

It localises to the nucleus. The protein localises to the cytoplasm. Functionally, ubiquitin-like protein which can be covalently attached to target lysines as a monomer. Does not seem to be involved in protein degradation and may function as an antagonist of ubiquitin in the degradation process. Promotes NPR1 sumoylation to activate defense gene expression and regulate its degradation. The chain is Small ubiquitin-related modifier 3 from Arabidopsis thaliana (Mouse-ear cress).